Here is a 306-residue protein sequence, read N- to C-terminus: uncharacterized protein (306 aa).

Residues 13 to 39 (NMLNEIAANNNLLNNKNNQTNQLNNNQ) are a coiled coil. Disordered stretches follow at residues 44–76 (YNNQNNNQNYPQNYPQNSQQNFQQNSQQNHQQN), 103–204 (DSKE…QSGQ), and 216–249 (QKQLDKNQPEKIPSKPEKNQKQSHKPKLPPTMQH). Residues 119 to 201 (HQQPIQNNPS…QFAQPNQYNQ (83 aa)) show a composition bias toward low complexity. Positions 218–235 (QLDKNQPEKIPSKPEKNQ) are enriched in basic and acidic residues. Residues 279–299 (LFDYIIIPIALVLVFLFLVHP) traverse the membrane as a helical segment.

The protein localises to the membrane. This is an uncharacterized protein from Acanthamoeba polyphaga mimivirus (APMV).